Here is a 261-residue protein sequence, read N- to C-terminus: Indole-3-glycerol phosphate synthase (261 aa).

It belongs to the TrpC family.

It carries out the reaction 1-(2-carboxyphenylamino)-1-deoxy-D-ribulose 5-phosphate + H(+) = (1S,2R)-1-C-(indol-3-yl)glycerol 3-phosphate + CO2 + H2O. It participates in amino-acid biosynthesis; L-tryptophan biosynthesis; L-tryptophan from chorismate: step 4/5. The protein is Indole-3-glycerol phosphate synthase of Burkholderia lata (strain ATCC 17760 / DSM 23089 / LMG 22485 / NCIMB 9086 / R18194 / 383).